The chain runs to 104 residues: Cuticle protein 67, isoform B (104 aa).

7 consecutive repeat copies span residues 7–10, 14–17, 21–24, 28–31, 85–88, 92–95, and 98–101.

Component of the cuticle of migratory locust which contains more than 100 different structural proteins. The protein is Cuticle protein 67, isoform B of Locusta migratoria (Migratory locust).